The primary structure comprises 184 residues: ATP synthase subunit b, chloroplastic (184 aa).

Residues 27–49 (LATNPINLSVVLGVLIFFGKGVL) form a helical membrane-spanning segment.

Belongs to the ATPase B chain family. F-type ATPases have 2 components, F(1) - the catalytic core - and F(0) - the membrane proton channel. F(1) has five subunits: alpha(3), beta(3), gamma(1), delta(1), epsilon(1). F(0) has four main subunits: a(1), b(1), b'(1) and c(10-14). The alpha and beta chains form an alternating ring which encloses part of the gamma chain. F(1) is attached to F(0) by a central stalk formed by the gamma and epsilon chains, while a peripheral stalk is formed by the delta, b and b' chains.

The protein resides in the plastid. Its subcellular location is the chloroplast thylakoid membrane. In terms of biological role, f(1)F(0) ATP synthase produces ATP from ADP in the presence of a proton or sodium gradient. F-type ATPases consist of two structural domains, F(1) containing the extramembraneous catalytic core and F(0) containing the membrane proton channel, linked together by a central stalk and a peripheral stalk. During catalysis, ATP synthesis in the catalytic domain of F(1) is coupled via a rotary mechanism of the central stalk subunits to proton translocation. Its function is as follows. Component of the F(0) channel, it forms part of the peripheral stalk, linking F(1) to F(0). The sequence is that of ATP synthase subunit b, chloroplastic from Cucumis sativus (Cucumber).